The following is a 201-amino-acid chain: Ribonuclease HII (201 aa).

The RNase H type-2 domain occupies 15-201 (AIIAGVDEAG…FAPIKAYGAP (187 aa)). A divalent metal cation is bound by residues Asp-21, Glu-22, and Asp-113.

It belongs to the RNase HII family. Mn(2+) serves as cofactor. It depends on Mg(2+) as a cofactor.

The protein localises to the cytoplasm. The enzyme catalyses Endonucleolytic cleavage to 5'-phosphomonoester.. Its function is as follows. Endonuclease that specifically degrades the RNA of RNA-DNA hybrids. In Bordetella pertussis (strain Tohama I / ATCC BAA-589 / NCTC 13251), this protein is Ribonuclease HII.